A 1831-amino-acid chain; its full sequence is Transmembrane protein 131 homolog (1831 aa).

The signal sequence occupies residues methionine 1 to alanine 29. Over aspartate 30–asparagine 1169 the chain is Lumenal. The papD-L domain stretch occupies residues glutamate 118–leucine 294. A helical transmembrane segment spans residues isoleucine 1170–alanine 1190. Residues tyrosine 1191 to asparagine 1831 lie on the Cytoplasmic side of the membrane. Residues serine 1223 to threonine 1234 are compositionally biased toward low complexity. Disordered stretches follow at residues serine 1223 to threonine 1252, glycine 1325 to aspartate 1516, glutamine 1663 to proline 1759, and tryptophan 1800 to asparagine 1831. Over residues proline 1338–alanine 1349 the composition is skewed to acidic residues. 2 stretches are compositionally biased toward low complexity: residues proline 1394–glutamine 1407 and glutamine 1435–threonine 1448. Residues glutamate 1455–lysine 1467 are compositionally biased toward basic and acidic residues. Positions threonine 1480–alanine 1497 are enriched in polar residues. Residues proline 1500–threonine 1514 show a composition bias toward low complexity. Composition is skewed to polar residues over residues serine 1669–lysine 1687, asparagine 1702–glutamine 1733, and tryptophan 1742–asparagine 1758. A compositionally biased stretch (low complexity) spans proline 1808 to glutamine 1820. Over residues threonine 1822–asparagine 1831 the composition is skewed to acidic residues.

The protein belongs to the TMEM131 family. As to quaternary structure, may interact (via PapD-L domain) with collagen proteins (via C-terminus); the interaction is direct and is involved in assembly and secretion of collagen. In terms of tissue distribution, predominantly expressed in the intestine and hypodermis.

Its subcellular location is the membrane. It is found in the endoplasmic reticulum membrane. In terms of biological role, collagen binding transmembrane protein involved in collagen secretion, probably by recruiting the ER-to-Golgi transport complex TRAPPIII. Required for normal development. The polypeptide is Transmembrane protein 131 homolog (Caenorhabditis elegans).